The chain runs to 422 residues: Testin (422 aa).

The PET domain maps to 92 to 199 (MILTSPVAAK…GDVKLPKEVE (108 aa)). A disordered region spans residues 135 to 165 (QPVAGSEGAQYRKKQLAKQLPAHDQDPSKCH). Basic and acidic residues predominate over residues 155 to 165 (PAHDQDPSKCH). 3 consecutive LIM zinc-binding domains span residues 234–299 (YYCF…SEKP), 300–359 (RCAG…NHAV), and 360–422 (SCQG…KMSS).

This sequence belongs to the prickle / espinas / testin family.

The protein localises to the cytoplasm. The protein resides in the cell cortex. It localises to the cell junction. Its subcellular location is the focal adhesion. Functionally, scaffold protein that may play a role in cell adhesion, cell spreading and in the reorganization of the actin cytoskeleton. May inhibit cell growth. Regulates cranial neural crest migration. Acts together with prickle1 to control axial elongation. The chain is Testin from Xenopus tropicalis (Western clawed frog).